The sequence spans 426 residues: Protein prenyltransferase alpha subunit repeat-containing protein 1 (426 aa).

PFTA repeat units follow at residues 86-119, 121-154, 180-213, and 219-252; these read ALVD…VLNP, KDLY…QKEC, EEMR…AKGN, and DELS…AKEL. The segment at 255 to 279 is disordered; it reads AAEKDVHTSQQPNGENTATASDDNH. Polar residues predominate over residues 262-275; sequence TSQQPNGENTATAS. Residues 290–323 form a PFTA 5 repeat; that stretch reads EEIQLCTDLIESYPGHETLWCHRRHVFYLWHQWR.

Belongs to the protein prenyltransferase subunit alpha family.

In Danio rerio (Zebrafish), this protein is Protein prenyltransferase alpha subunit repeat-containing protein 1 (ptar1).